Consider the following 378-residue polypeptide: MNIWLNMLTTTGLGAIIGGYTNHLAIKMLFRPHRPIYIGKFQVPFTPGLIPKRRDELAVQLGKMVVEHLLTPEGIGKKLTNEEFQKGLIHWAQVEVDKVIKNEQSLRHMLEKWNVAHVEEEVTQKIEYVITEKIQAFLAEYYTYTWEQALPHSVNEKVENAIPNVSAFILERGISFFESEEGKGRLSKMIDDFFASRGTLLNLVGMFLGNVSVVDRVQPEVIKFLGQDGTKQLLTDVLQKEWEKLKGRDVKELESFVEKEMIVSSVLSAVKVEETVSKFLNQSVQQVCEPVRETIIEKVVPSTVTKGLKWGTENVESILNNLHLAEIVQQEVSTFSTERLEDLVLSITKNELKMITYLGALLGGIIGLVQGLLLLFLR.

A helical transmembrane segment spans residues 357 to 377; the sequence is YLGALLGGIIGLVQGLLLLFL.

Belongs to the UPF0754 family.

The protein resides in the cell membrane. This chain is UPF0754 membrane protein BCG9842_B4423, found in Bacillus cereus (strain G9842).